A 510-amino-acid chain; its full sequence is 2,3-bisphosphoglycerate-independent phosphoglycerate mutase (510 aa).

The Mn(2+) site is built by Asp14 and Ser64. The active-site Phosphoserine intermediate is the Ser64. Residues His125, 155–156 (RD), Arg187, Arg193, 259–262 (RADR), and Lys332 each bind substrate. Mn(2+) contacts are provided by Asp399, His403, Asp440, His441, and His459.

This sequence belongs to the BPG-independent phosphoglycerate mutase family. Monomer. The cofactor is Mn(2+).

The enzyme catalyses (2R)-2-phosphoglycerate = (2R)-3-phosphoglycerate. Its pathway is carbohydrate degradation; glycolysis; pyruvate from D-glyceraldehyde 3-phosphate: step 3/5. Functionally, catalyzes the interconversion of 2-phosphoglycerate and 3-phosphoglycerate. This Pseudomonas syringae pv. syringae (strain B728a) protein is 2,3-bisphosphoglycerate-independent phosphoglycerate mutase.